The sequence spans 206 residues: Heterochromatin protein 1 (206 aa).

Disordered stretches follow at residues methionine 1 to tyrosine 24 and glycine 47 to arginine 145. A phosphoserine mark is found at serine 11 and serine 15. A Chromo 1 domain is found at tyrosine 24–alanine 82. Positions glutamate 50–asparagine 60 are enriched in low complexity. Over residues alanine 72–glutamine 98 the composition is skewed to basic and acidic residues. Positions lysine 95 to aspartate 206 are binds to Su(var)39. Phosphoserine is present on residues serine 102, serine 103, and serine 113. 3 positions are modified to phosphothreonine: threonine 127, threonine 128, and threonine 134. Residues leucine 147–glutamate 205 enclose the Chromo 2 domain.

Homodimer. Probably associates with Su(var)3-9. Interacts with Mcm10. Interacts (via chromoshadow domain) with piwi (via N-terminal region). Interacts with Rrp6. Associates with and may be part of the HipHop-HOAP telomere capping complex but is not required for its stability or telomere localization. Interacts (via the chromo domain 2 (chromoshadow domain) and the hinge region between chromo domains 1 and 2) with cav/HOAP (via C-terminus); the interaction is direct. Each molecule of cav/HOAP interacts with 2 molecules of Su(var)205/HP1. Interacts with HipHop (via N-terminus). Interacts with moi/modigliani; the interaction is direct. Interacts (via chromo domain 1) with His3/histone 3 (via N-terminal tail methylated at 'Lys-10'); the interaction is direct. As to expression, salivary gland (at protein level).

It is found in the nucleus. Its subcellular location is the nucleoplasm. It localises to the chromosome. The protein resides in the telomere. Structural component of heterochromatin, involved in gene repression and the modification of position-effect-variegation. Recognizes and binds histone H3 tails methylated at 'Lys-9', leading to epigenetic repression. Stabilizes chromatin-associated RNAs probably by binding to them and thereby preventing their degradation. Associates with, and may be a part of, the HipHop-HOAP complex that recruits the MTV complex to form the terminin telomere-capping complex, which binds to chromosome ends in a sequence-independent manner and prevents telomere fusion. Telomere capping is independent of the origin recognition complex (ORC). The protein is Heterochromatin protein 1 of Drosophila melanogaster (Fruit fly).